The sequence spans 231 residues: GTP cyclohydrolase III (231 aa).

This sequence belongs to the archaeal-type GTP cyclohydrolase family.

It carries out the reaction GTP + 3 H2O = 2-amino-5-formylamino-6-(5-phospho-D-ribosylamino)pyrimidin-4(3H)-one + 2 phosphate + 2 H(+). In terms of biological role, catalyzes the formation of 2-amino-5-formylamino-6-ribofuranosylamino-4(3H)-pyrimidinone ribonucleotide monophosphate and inorganic phosphate from GTP. Also has an independent pyrophosphate phosphohydrolase activity. In Saccharolobus solfataricus (strain ATCC 35092 / DSM 1617 / JCM 11322 / P2) (Sulfolobus solfataricus), this protein is GTP cyclohydrolase III.